The chain runs to 255 residues: uncharacterized protein (255 aa).

Residues 4–72 (DPYSVLGVEK…KRRKHYDKTG (69 aa)) enclose the J domain. Basic residues-rich tracts occupy residues 167-178 (FAPNEKKRKRRA) and 243-255 (TKPK…RSKE). 2 disordered regions span residues 167 to 215 (FAPN…EEAL) and 230 to 255 (LISN…RSKE).

This sequence belongs to the DnaJ family.

It localises to the nucleus. It is found in the nucleolus. This is an uncharacterized protein from Schizosaccharomyces pombe (strain 972 / ATCC 24843) (Fission yeast).